Consider the following 342-residue polypeptide: Probable RNA methyltransferase PST_2231 (342 aa).

Glu-91 (proton acceptor) is an active-site residue. The 227-residue stretch at 94 to 320 (LLPRDGLCVS…TKVRNSAGQD (227 aa)) folds into the Radical SAM core domain. Cys-101 and Cys-325 are oxidised to a cystine. 3 residues coordinate [4Fe-4S] cluster: Cys-108, Cys-112, and Cys-115. S-adenosyl-L-methionine-binding positions include 153 to 154 (GE), Ser-183, 206 to 208 (SLH), and Asn-282. Cys-325 (S-methylcysteine intermediate) is an active-site residue.

The protein belongs to the radical SAM superfamily. RlmN family. Requires [4Fe-4S] cluster as cofactor.

It is found in the cytoplasm. This Stutzerimonas stutzeri (strain A1501) (Pseudomonas stutzeri) protein is Probable RNA methyltransferase PST_2231.